Consider the following 829-residue polypeptide: Periplasmic nitrate reductase (829 aa).

Residues 1–30 constitute a signal peptide (tat-type signal); sequence MKMTRRAFVKANAAASAAAVAGITLPASAA. A 4Fe-4S Mo/W bis-MGD-type domain is found at 41 to 97; the sequence is ITWDKAPCRFCGTGCSVLVGTQNGKVVATQGDPEAPVNKGLNCIKGYFLSKIMYGQD. Cysteine 48, cysteine 51, cysteine 55, and cysteine 83 together coordinate [4Fe-4S] cluster. Residues lysine 85, glutamine 152, asparagine 177, cysteine 181, 214–221, 245–249, 264–266, methionine 374, glutamine 378, asparagine 484, 510–511, lysine 533, aspartate 560, and 718–727 contribute to the Mo-bis(molybdopterin guanine dinucleotide) site; these read WGSNMAEM, STYYH, QSD, SD, and TGRVLEHWHT. Phenylalanine 794 contacts substrate. Positions 802 and 819 each coordinate Mo-bis(molybdopterin guanine dinucleotide).

Belongs to the prokaryotic molybdopterin-containing oxidoreductase family. NasA/NapA/NarB subfamily. Component of the periplasmic nitrate reductase NapAB complex composed of NapA and NapB. It depends on [4Fe-4S] cluster as a cofactor. Mo-bis(molybdopterin guanine dinucleotide) serves as cofactor. In terms of processing, predicted to be exported by the Tat system. The position of the signal peptide cleavage has not been experimentally proven.

It localises to the periplasm. The catalysed reaction is 2 Fe(II)-[cytochrome] + nitrate + 2 H(+) = 2 Fe(III)-[cytochrome] + nitrite + H2O. Functionally, catalytic subunit of the periplasmic nitrate reductase complex NapAB. Receives electrons from NapB and catalyzes the reduction of nitrate to nitrite. The polypeptide is Periplasmic nitrate reductase (Vibrio vulnificus (strain YJ016)).